A 201-amino-acid chain; its full sequence is Thymidine kinase (201 aa).

ATP is bound by residues 9–16 (SAMNAGKS) and 87–90 (DECH). Glu-88 acts as the Proton acceptor in catalysis. Zn(2+)-binding residues include Cys-145, Cys-147, Cys-182, and His-185.

The protein belongs to the thymidine kinase family. As to quaternary structure, homotetramer.

The protein resides in the cytoplasm. The enzyme catalyses thymidine + ATP = dTMP + ADP + H(+). The protein is Thymidine kinase of Photorhabdus laumondii subsp. laumondii (strain DSM 15139 / CIP 105565 / TT01) (Photorhabdus luminescens subsp. laumondii).